Consider the following 360-residue polypeptide: Phospho-N-acetylmuramoyl-pentapeptide-transferase (360 aa).

10 consecutive transmembrane segments (helical) span residues 21-41 (YITF…LWIG), 73-93 (TMGG…WADL), 98-118 (VWFV…DDYW), 132-152 (WKYF…YAVG), 168-188 (FMPQ…VGTS), 199-219 (GLAI…AWAT), 236-256 (AGEL…FLWY), 263-283 (VFMG…IAVL), 288-308 (LLLV…ILQV), and 338-358 (VIVR…VTLK).

Belongs to the glycosyltransferase 4 family. MraY subfamily. Mg(2+) is required as a cofactor.

Its subcellular location is the cell inner membrane. It catalyses the reaction UDP-N-acetyl-alpha-D-muramoyl-L-alanyl-gamma-D-glutamyl-meso-2,6-diaminopimeloyl-D-alanyl-D-alanine + di-trans,octa-cis-undecaprenyl phosphate = di-trans,octa-cis-undecaprenyl diphospho-N-acetyl-alpha-D-muramoyl-L-alanyl-D-glutamyl-meso-2,6-diaminopimeloyl-D-alanyl-D-alanine + UMP. Its pathway is cell wall biogenesis; peptidoglycan biosynthesis. Its function is as follows. Catalyzes the initial step of the lipid cycle reactions in the biosynthesis of the cell wall peptidoglycan: transfers peptidoglycan precursor phospho-MurNAc-pentapeptide from UDP-MurNAc-pentapeptide onto the lipid carrier undecaprenyl phosphate, yielding undecaprenyl-pyrophosphoryl-MurNAc-pentapeptide, known as lipid I. The protein is Phospho-N-acetylmuramoyl-pentapeptide-transferase of Actinobacillus pleuropneumoniae serotype 3 (strain JL03).